The chain runs to 264 residues: tRNA (guanine-N(1)-)-methyltransferase (264 aa).

Residues G125 and L145–L150 each bind S-adenosyl-L-methionine.

This sequence belongs to the RNA methyltransferase TrmD family. In terms of assembly, homodimer.

The protein localises to the cytoplasm. The enzyme catalyses guanosine(37) in tRNA + S-adenosyl-L-methionine = N(1)-methylguanosine(37) in tRNA + S-adenosyl-L-homocysteine + H(+). Functionally, specifically methylates guanosine-37 in various tRNAs. The chain is tRNA (guanine-N(1)-)-methyltransferase from Burkholderia cenocepacia (strain ATCC BAA-245 / DSM 16553 / LMG 16656 / NCTC 13227 / J2315 / CF5610) (Burkholderia cepacia (strain J2315)).